A 182-amino-acid polypeptide reads, in one-letter code: Putative lipoprotein LpqE (182 aa).

An N-terminal signal peptide occupies residues Met-1–Gly-29. A lipid anchor (N-palmitoyl cysteine) is attached at Cys-30. Residue Cys-30 is the site of S-diacylglycerol cysteine attachment.

The protein resides in the cell membrane. The protein is Putative lipoprotein LpqE (lpqE) of Mycobacterium bovis (strain ATCC BAA-935 / AF2122/97).